The chain runs to 421 residues: Gamma-glutamyl phosphate reductase (421 aa).

Belongs to the gamma-glutamyl phosphate reductase family.

It localises to the cytoplasm. The catalysed reaction is L-glutamate 5-semialdehyde + phosphate + NADP(+) = L-glutamyl 5-phosphate + NADPH + H(+). Its pathway is amino-acid biosynthesis; L-proline biosynthesis; L-glutamate 5-semialdehyde from L-glutamate: step 2/2. Its function is as follows. Catalyzes the NADPH-dependent reduction of L-glutamate 5-phosphate into L-glutamate 5-semialdehyde and phosphate. The product spontaneously undergoes cyclization to form 1-pyrroline-5-carboxylate. The sequence is that of Gamma-glutamyl phosphate reductase from Brucella melitensis biotype 1 (strain ATCC 23456 / CCUG 17765 / NCTC 10094 / 16M).